The following is a 299-amino-acid chain: 4-hydroxy-tetrahydrodipicolinate synthase (299 aa).

T44 lines the pyruvate pocket. The active-site Proton donor/acceptor is Y133. The active-site Schiff-base intermediate with substrate is the K162. I204 is a binding site for pyruvate.

This sequence belongs to the DapA family. As to quaternary structure, homotetramer; dimer of dimers.

It localises to the cytoplasm. The catalysed reaction is L-aspartate 4-semialdehyde + pyruvate = (2S,4S)-4-hydroxy-2,3,4,5-tetrahydrodipicolinate + H2O + H(+). It functions in the pathway amino-acid biosynthesis; L-lysine biosynthesis via DAP pathway; (S)-tetrahydrodipicolinate from L-aspartate: step 3/4. Its function is as follows. Catalyzes the condensation of (S)-aspartate-beta-semialdehyde [(S)-ASA] and pyruvate to 4-hydroxy-tetrahydrodipicolinate (HTPA). The polypeptide is 4-hydroxy-tetrahydrodipicolinate synthase (Thermus thermophilus (strain ATCC 27634 / DSM 579 / HB8)).